Here is a 241-residue protein sequence, read N- to C-terminus: Sugar fermentation stimulation protein homolog (241 aa).

It belongs to the SfsA family.

This Jannaschia sp. (strain CCS1) protein is Sugar fermentation stimulation protein homolog.